Consider the following 343-residue polypeptide: Protein RecA (343 aa).

An ATP-binding site is contributed by 64–71; it reads GPESSGKT.

It belongs to the RecA family.

It is found in the cytoplasm. Functionally, can catalyze the hydrolysis of ATP in the presence of single-stranded DNA, the ATP-dependent uptake of single-stranded DNA by duplex DNA, and the ATP-dependent hybridization of homologous single-stranded DNAs. It interacts with LexA causing its activation and leading to its autocatalytic cleavage. The polypeptide is Protein RecA (Bacillus mycoides (strain KBAB4) (Bacillus weihenstephanensis)).